A 374-amino-acid chain; its full sequence is Biotin synthase (374 aa).

Positions 51 to 278 constitute a Radical SAM core domain; the sequence is NTVKVNYLVN…DTEIRIAGGR (228 aa). Residues cysteine 66, cysteine 70, and cysteine 73 each coordinate [4Fe-4S] cluster. 4 residues coordinate [2Fe-2S] cluster: cysteine 110, cysteine 143, cysteine 203, and arginine 273. The interval 346 to 374 is disordered; the sequence is IAGGTSVAGSAPDPAIRRRGAGTDVPANA.

Belongs to the radical SAM superfamily. Biotin synthase family. As to quaternary structure, homodimer. Requires [4Fe-4S] cluster as cofactor. It depends on [2Fe-2S] cluster as a cofactor.

The catalysed reaction is (4R,5S)-dethiobiotin + (sulfur carrier)-SH + 2 reduced [2Fe-2S]-[ferredoxin] + 2 S-adenosyl-L-methionine = (sulfur carrier)-H + biotin + 2 5'-deoxyadenosine + 2 L-methionine + 2 oxidized [2Fe-2S]-[ferredoxin]. The protein operates within cofactor biosynthesis; biotin biosynthesis; biotin from 7,8-diaminononanoate: step 2/2. Functionally, catalyzes the conversion of dethiobiotin (DTB) to biotin by the insertion of a sulfur atom into dethiobiotin via a radical-based mechanism. The protein is Biotin synthase of Nocardioides sp. (strain ATCC BAA-499 / JS614).